A 220-amino-acid polypeptide reads, in one-letter code: Tumor protein D54 (220 aa).

Met1 carries the N-acetylmethionine modification. The segment covering 1–14 (MDSASQDINLNSPN) has biased composition (polar residues). The disordered stretch occupies residues 1–26 (MDSASQDINLNSPNKGVLSDFMTDVP). Phosphoserine occurs at positions 3, 12, and 19. Residues 40 to 82 (GLTEVEEEELRAELAKVEEEIVTLRQVLAAKERHCGELKRRLG) adopt a coiled-coil conformation. 4 positions are modified to phosphoserine: Ser96, Ser149, Ser168, and Ser175. Thr177 carries the phosphothreonine modification. Ser180 is modified (phosphoserine). At Thr187 the chain carries Phosphothreonine. Residues 189-220 (KSKVVGGRENGSDTLPSSPGSGDQTLPDHAPF) form a disordered region. The segment covering 200-212 (SDTLPSSPGSGDQ) has biased composition (polar residues). A phosphoserine mark is found at Ser206 and Ser209.

It belongs to the TPD52 family. As to quaternary structure, forms a homodimer or heterodimer with other members of the family. Interacts with MAL2.

In Rattus norvegicus (Rat), this protein is Tumor protein D54 (Tpd52l2).